Reading from the N-terminus, the 282-residue chain is Inositol oxygenase (282 aa).

The tract at residues 1-25 (MKDPDPSQVYRPDMDPEAAKDKGSF) is disordered. Residues 12-24 (PDMDPEAAKDKGS) are compositionally biased toward basic and acidic residues. Arg-26 is a substrate binding site. Ser-30 is modified (phosphoserine). 82 to 84 (DES) is a binding site for substrate. Fe cation contacts are provided by His-95, His-120, and Asp-121. Substrate-binding positions include Lys-124 and 138–139 (GD). Positions 191, 217, and 250 each coordinate Fe cation. 217 to 218 (HS) contacts substrate.

This sequence belongs to the myo-inositol oxygenase family. It depends on Fe cation as a cofactor. The N-terminus is blocked. As to expression, kidney specific.

It is found in the cytoplasm. The catalysed reaction is myo-inositol + O2 = D-glucuronate + H2O + H(+). It participates in polyol metabolism; myo-inositol degradation into D-glucuronate; D-glucuronate from myo-inositol: step 1/1. The protein is Inositol oxygenase (MIOX) of Sus scrofa (Pig).